The primary structure comprises 87 residues: U3-theraphotoxin-Hhn1q (87 aa).

The N-terminal stretch at 1–24 (MVNMKASMFLTFAGLVLLFVVCYA) is a signal peptide. Positions 25–52 (SESEEKEFPKEMLSSIFAVDNDFKQEER) are excised as a propeptide. 3 disulfides stabilise this stretch: Cys-54/Cys-67, Cys-61/Cys-72, and Cys-66/Cys-79.

Belongs to the neurotoxin 10 (Hwtx-1) family. 51 (Hntx-8) subfamily. Hntx-8 sub-subfamily. Expressed by the venom gland.

It is found in the secreted. Ion channel inhibitor. This chain is U3-theraphotoxin-Hhn1q, found in Cyriopagopus hainanus (Chinese bird spider).